The following is a 309-amino-acid chain: Prepilin leader peptidase/N-methyltransferase (309 aa).

Residues 35–55 (MQLAFAIVLGLVVGSFLNVVV) traverse the membrane as a helical segment. Positions 96, 99, 121, and 124 each coordinate Zn(2+). 6 consecutive transmembrane segments (helical) span residues 147–167 (LALF…AALL), 183–203 (LTLP…FASL), 207–227 (VIGA…FKLL), 230–250 (IEGI…WLGW), 253–273 (LPQV…VATW), and 288–308 (FLAA…LLLG).

The protein belongs to the peptidase A24 family. Requires Zn(2+) as cofactor.

Its subcellular location is the cell inner membrane. The catalysed reaction is Typically cleaves a -Gly-|-Phe- bond to release an N-terminal, basic peptide of 5-8 residues from type IV prepilin, and then N-methylates the new N-terminal amino group, the methyl donor being S-adenosyl-L-methionine.. Its function is as follows. Plays an essential role in type IV pili and type II pseudopili formation by proteolytically removing the leader sequence from substrate proteins and subsequently monomethylating the alpha-amino group of the newly exposed N-terminal phenylalanine. This is Prepilin leader peptidase/N-methyltransferase (gspO) from Burkholderia pseudomallei (strain 1026b).